Consider the following 82-residue polypeptide: Modifier of protein aggregation 4 (82 aa).

Residues 1 to 23 show a composition bias toward basic and acidic residues; it reads MTRGNQRDLAREKNQKKLADQKK. 2 disordered regions span residues 1 to 41 and 63 to 82; these read MTRG…MDAR and EAAA…PLKM.

It belongs to the SERF family.

Its subcellular location is the cytoplasm. It is found in the cytosol. The protein localises to the nucleus. In terms of biological role, positive regulator of protein aggregation and age-related proteotoxicity. Induces conformational changes in aggregation-prone proteins, driving them into compact formations preceding the formation of aggregates. The polypeptide is Modifier of protein aggregation 4 (Caenorhabditis elegans).